The chain runs to 124 residues: Small ribosomal subunit protein uS13 (124 aa).

The disordered stretch occupies residues 94-124; it reads GLPLRGQRTKNNSRTRKGKRKTVANKKKATK. Over residues 100-124 the composition is skewed to basic residues; sequence QRTKNNSRTRKGKRKTVANKKKATK.

This sequence belongs to the universal ribosomal protein uS13 family. As to quaternary structure, part of the 30S ribosomal subunit. Forms a loose heterodimer with protein S19. Forms two bridges to the 50S subunit in the 70S ribosome.

In terms of biological role, located at the top of the head of the 30S subunit, it contacts several helices of the 16S rRNA. In the 70S ribosome it contacts the 23S rRNA (bridge B1a) and protein L5 of the 50S subunit (bridge B1b), connecting the 2 subunits; these bridges are implicated in subunit movement. Contacts the tRNAs in the A and P-sites. The polypeptide is Small ribosomal subunit protein uS13 (Flavobacterium johnsoniae (strain ATCC 17061 / DSM 2064 / JCM 8514 / BCRC 14874 / CCUG 350202 / NBRC 14942 / NCIMB 11054 / UW101) (Cytophaga johnsonae)).